A 136-amino-acid chain; its full sequence is Outer envelope pore protein 16-4, chloroplastic (136 aa).

The tract at residues 1–59 is contains 4 beta strands; the sequence is MEEELLSAVPCSSLTVESVLRVATAGGLYGLCAGPRDARKIGLSGVSQASFVAKSIGRF. 4 helical membrane-spanning segments follow: residues 18–34, 56–72, 86–102, and 110–126; these read SVLR…LCAG, IGRF…VFTM, WVNA…AVAI, and VVGM…LANC.

Belongs to the Tim17/Tim22/Tim23 family. Plastid outer envelope porin OEP16 (TC 1.B.30) subfamily. Homodimer and oligomers in membrane.

Its subcellular location is the plastid. The protein resides in the chloroplast outer membrane. Voltage-dependent high-conductance channel with a slight cation-selectivity; selective for amino acids but excludes triosephosphates or uncharged sugars. Non-essential amino acid-selective channel protein and translocation pore for NADPH:protochlorophyllide oxidoreductase A (PORA) and possibly PORB. This is Outer envelope pore protein 16-4, chloroplastic (OEP164) from Arabidopsis thaliana (Mouse-ear cress).